Consider the following 352-residue polypeptide: Ion-translocating oxidoreductase complex subunit D (352 aa).

Transmembrane regions (helical) follow at residues 20 to 40 (IMLL…WFFG), 42 to 62 (GTLV…ALVL), 78 to 109 (ALLT…VIIA), 123 to 143 (PAMI…TSWL), and 148 to 168 (IAVN…GHTA). Thr187 carries the post-translational modification FMN phosphoryl threonine. The next 5 membrane-spanning stretches (helical) occupy residues 214 to 234 (ILAG…GVWL), 242 to 262 (WHIP…GWLF), 267 to 287 (LAAP…FFIL), 301 to 321 (LIFG…GGYP), and 322 to 342 (DGVA…DYYT).

It belongs to the NqrB/RnfD family. As to quaternary structure, the complex is composed of six subunits: RsxA, RsxB, RsxC, RsxD, RsxE and RsxG. The cofactor is FMN.

It localises to the cell inner membrane. Functionally, part of a membrane-bound complex that couples electron transfer with translocation of ions across the membrane. Required to maintain the reduced state of SoxR. In Escherichia coli O157:H7, this protein is Ion-translocating oxidoreductase complex subunit D.